A 241-amino-acid chain; its full sequence is Phosphoadenosine 5'-phosphosulfate reductase (241 aa).

The active-site Nucleophile; cysteine thiosulfonate intermediate is the Cys-235.

Belongs to the PAPS reductase family. CysH subfamily.

The protein resides in the cytoplasm. It catalyses the reaction [thioredoxin]-disulfide + sulfite + adenosine 3',5'-bisphosphate + 2 H(+) = [thioredoxin]-dithiol + 3'-phosphoadenylyl sulfate. The protein operates within sulfur metabolism; hydrogen sulfide biosynthesis; sulfite from sulfate: step 3/3. Catalyzes the formation of sulfite from phosphoadenosine 5'-phosphosulfate (PAPS) using thioredoxin as an electron donor. The protein is Phosphoadenosine 5'-phosphosulfate reductase of Xanthomonas euvesicatoria pv. vesicatoria (strain 85-10) (Xanthomonas campestris pv. vesicatoria).